A 751-amino-acid polypeptide reads, in one-letter code: Leucine-rich repeat-containing protein 56 homolog (751 aa).

The tract at residues 1–149 (MKKSTVLDAR…IDKSRDNGQL (149 aa)) is disordered. Residues 13 to 22 (GPLPRRPQQP) are compositionally biased toward pro residues. Polar residues-rich tracts occupy residues 28–39 (RNSSQVEKNNAR) and 60–87 (HSQSQSLDTSFAPNTNTTLGSTDVNLNS). LRR repeat units follow at residues 210 to 235 (MPQLNSLKLNNSRITELRVLGTNYAN), 236 to 256 (LRRLWISNCLVSSVSGVGACA), 258 to 279 (VLEELYASFNSISDIDALTEVS), 280 to 304 (STLQVVDLEGNDIRDTDMLKRTLPQ), and 307 to 328 (KMKHLVLKGNPVASSETIVELS). Disordered stretches follow at residues 430–538 (SRSH…QRQQ), 645–698 (TCTH…EKDW), and 717–751 (EAALKERVQGSKEVDGGGLEKVESEDEEDVSPVVF). Polar residues-rich tracts occupy residues 456–471 (KNSQSTASSGDSTNQG) and 662–671 (QQEQPTTAGA). Positions 717-738 (EAALKERVQGSKEVDGGGLEKV) are enriched in basic and acidic residues. Residues 739 to 751 (ESEDEEDVSPVVF) show a composition bias toward acidic residues.

It belongs to the LRRC56 family.

The protein resides in the cell projection. It is found in the cilium. It localises to the flagellum. Functionally, required for the assembly of dynein arms in the distal portion of flagellum axoneme. The protein is Leucine-rich repeat-containing protein 56 homolog of Trypanosoma brucei brucei (strain 927/4 GUTat10.1).